We begin with the raw amino-acid sequence, 267 residues long: Acetylglutamate kinase (267 aa).

Substrate is bound by residues 53–54 (GG), Arg-75, and Asn-167.

It belongs to the acetylglutamate kinase family. ArgB subfamily.

Its subcellular location is the cytoplasm. It carries out the reaction N-acetyl-L-glutamate + ATP = N-acetyl-L-glutamyl 5-phosphate + ADP. It participates in amino-acid biosynthesis; L-arginine biosynthesis; N(2)-acetyl-L-ornithine from L-glutamate: step 2/4. Catalyzes the ATP-dependent phosphorylation of N-acetyl-L-glutamate. The protein is Acetylglutamate kinase of Shewanella pealeana (strain ATCC 700345 / ANG-SQ1).